Here is a 276-residue protein sequence, read N- to C-terminus: MQGSLSWLLRFVEGQQLSSLPRQSHRITMLAGLSVLNLFPLAALEVGQQWYWEIGNLKLHGQTFATSWFVILLLVIASLAATRNVQRVPSGIQNLMEYVLEFLRDLARNQLGEKEYRPWLPFIGTLFLFIFVSNWSGALLPWKLIHIPDGAELAAPTNDINTTVALALLTSLAYFYAGLRKKGLGYFANYVQPIPVLLPIKILEDFTKPLSLSFRLFGNILADELVVAVLVLLVPLLVPLPLMALGLFTSAIQALVFATLAGAYIHEAIESEGEEH.

The next 6 membrane-spanning stretches (helical) occupy residues 27 to 47, 61 to 81, 120 to 140, 159 to 179, 225 to 245, and 246 to 266; these read ITMLAGLSVLNLFPLAALEVG, GQTFATSWFVILLLVIASLAA, LPFIGTLFLFIFVSNWSGALL, DINTTVALALLTSLAYFYAGL, LVVAVLVLLVPLLVPLPLMAL, and GLFTSAIQALVFATLAGAYIH.

Belongs to the ATPase A chain family. As to quaternary structure, F-type ATPases have 2 components, CF(1) - the catalytic core - and CF(0) - the membrane proton channel. CF(1) has five subunits: alpha(3), beta(3), gamma(1), delta(1), epsilon(1). CF(0) has four main subunits: a, b, b' and c.

It is found in the cellular thylakoid membrane. Its function is as follows. Key component of the proton channel; it plays a direct role in the translocation of protons across the membrane. This chain is ATP synthase subunit a, found in Synechocystis sp. (strain ATCC 27184 / PCC 6803 / Kazusa).